The following is a 229-amino-acid chain: Aquaporin Z (229 aa).

The next 2 membrane-spanning stretches (helical) occupy residues 8–28 (FLGTFWLVLGGCGSAVLAAGF) and 33–53 (IGFAGVALAFGLTVVTMAYAI). Residues 62–64 (NPA) carry the NPA 1 motif. 3 helical membrane-spanning segments follow: residues 88-108 (VLGAIAAGAVLYVIASGGAGF), 129-149 (LLAALVCEVVMTMFFLLVIMG), and 158-178 (GFAPLAIGLALTLIHLISIPV). An NPA 2 motif is present at residues 184 to 186 (NPA). The helical transmembrane segment at 192-212 (ALFVGGWAVQQLWLFWLAPII) threads the bilayer.

The protein belongs to the MIP/aquaporin (TC 1.A.8) family. In terms of assembly, homotetramer.

Its subcellular location is the cell inner membrane. The enzyme catalyses H2O(in) = H2O(out). Functionally, channel that permits osmotically driven movement of water in both directions. It is involved in the osmoregulation and in the maintenance of cell turgor during volume expansion in rapidly growing cells. It mediates rapid entry or exit of water in response to abrupt changes in osmolarity. This Chromobacterium violaceum (strain ATCC 12472 / DSM 30191 / JCM 1249 / CCUG 213 / NBRC 12614 / NCIMB 9131 / NCTC 9757 / MK) protein is Aquaporin Z.